We begin with the raw amino-acid sequence, 216 residues long: Guanylate kinase (216 aa).

Residues 11 to 189 (GVLIVISGPS…AVKKIEAILL (179 aa)) enclose the Guanylate kinase-like domain. 18–25 (GPSGAGKG) contacts ATP.

It belongs to the guanylate kinase family.

It is found in the cytoplasm. The enzyme catalyses GMP + ATP = GDP + ADP. Its function is as follows. Essential for recycling GMP and indirectly, cGMP. This Clostridium perfringens (strain 13 / Type A) protein is Guanylate kinase (gmk).